We begin with the raw amino-acid sequence, 412 residues long: tRNA N6-adenosine threonylcarbamoyltransferase, mitochondrial (412 aa).

Residues 1–78 constitute a mitochondrion transit peptide; sequence MLCLVYNSIL…IICLNTHRTI (78 aa). 2 residues coordinate a divalent metal cation: H157 and H161. Substrate-binding positions include 179 to 183, D212, A228, E232, 328 to 329, and S363; these read LVSGG and RN. D364 is an a divalent metal cation binding site.

It belongs to the KAE1 / TsaD family. Homodimer. It depends on a divalent metal cation as a cofactor.

The protein localises to the mitochondrion. The catalysed reaction is L-threonylcarbamoyladenylate + adenosine(37) in tRNA = N(6)-L-threonylcarbamoyladenosine(37) in tRNA + AMP + H(+). Required for the formation of a threonylcarbamoyl group on adenosine at position 37 (t(6)A37) in mitochondrial tRNAs that read codons beginning with adenine. Probably involved in the transfer of the threonylcarbamoyl moiety of threonylcarbamoyl-AMP (TC-AMP) to the N6 group of A37. Involved in mitochondrial genome maintenance. The sequence is that of tRNA N6-adenosine threonylcarbamoyltransferase, mitochondrial (pgp1) from Schizosaccharomyces pombe (strain 972 / ATCC 24843) (Fission yeast).